Consider the following 310-residue polypeptide: Oxygen-dependent coproporphyrinogen-III oxidase (310 aa).

Ser97 is a substrate binding site. Residues His101 and His111 each coordinate a divalent metal cation. Catalysis depends on His111, which acts as the Proton donor. 113 to 115 (NFR) lines the substrate pocket. Positions 150 and 180 each coordinate a divalent metal cation. Residues 245–280 (YVEFNLLYDRGTRFGLEFGGRTESILMSLPPRVVWR) are important for dimerization. 263–265 (GGR) is a binding site for substrate.

It belongs to the aerobic coproporphyrinogen-III oxidase family. Homodimer. It depends on a divalent metal cation as a cofactor.

Its subcellular location is the cytoplasm. It carries out the reaction coproporphyrinogen III + O2 + 2 H(+) = protoporphyrinogen IX + 2 CO2 + 2 H2O. Its pathway is porphyrin-containing compound metabolism; protoporphyrin-IX biosynthesis; protoporphyrinogen-IX from coproporphyrinogen-III (O2 route): step 1/1. Involved in the heme biosynthesis. Catalyzes the aerobic oxidative decarboxylation of propionate groups of rings A and B of coproporphyrinogen-III to yield the vinyl groups in protoporphyrinogen-IX. The chain is Oxygen-dependent coproporphyrinogen-III oxidase from Coxiella burnetii (strain RSA 331 / Henzerling II).